The primary structure comprises 84 residues: Small, acid-soluble spore protein gamma-type (84 aa).

2 stretches are compositionally biased toward polar residues: residues 1–25 (MANSNNFSKTNAQQVRKQNQQSAAG) and 34–44 (ASETNAQQVRK). The tract at residues 1–84 (MANSNNFSKT…SAEQNKQQNS (84 aa)) is disordered. 2 repeats span residues 21 to 47 (QSAAGQGQFGTEFASETNAQQVRKQNQ) and 48 to 74 (QSAGQQGQFGTEFASETDAQQVRQQNQ). Composition is skewed to low complexity over residues 45 to 57 (QNQQSAGQQGQFG) and 71 to 84 (QQNQSAEQNKQQNS).

Belongs to the gamma-type SASP family.

In terms of biological role, SASP are proteins degraded in the first minutes of spore germination and provide amino acids for both new protein synthesis and metabolism. These proteins may be involved in dormant spore's high resistance to UV light. The polypeptide is Small, acid-soluble spore protein gamma-type (sspE) (Bacillus subtilis (strain 168)).